The following is a 126-amino-acid chain: MAILGLGTDIVEIARIEAVIARSGERLARRVLSDNEWEIWKTHHQPVRFLAKRFAVKEAAAKAFGTGIRNGLAFNQFEVFNDELGKPRLRLWGEALKLAEKLGVVNMHVTLADERHYACATVIIES.

Mg(2+) contacts are provided by aspartate 9 and glutamate 58.

This sequence belongs to the P-Pant transferase superfamily. AcpS family. Mg(2+) serves as cofactor.

The protein resides in the cytoplasm. The catalysed reaction is apo-[ACP] + CoA = holo-[ACP] + adenosine 3',5'-bisphosphate + H(+). Its function is as follows. Transfers the 4'-phosphopantetheine moiety from coenzyme A to a Ser of acyl-carrier-protein. The sequence is that of Holo-[acyl-carrier-protein] synthase from Escherichia coli O127:H6 (strain E2348/69 / EPEC).